An 881-amino-acid chain; its full sequence is Rho GTPase-activating protein 17 (881 aa).

Residues 14–246 (QTVGRAEKTE…MRAHQDKWAE (233 aa)) enclose the BAR domain. One can recognise a Rho-GAP domain in the interval 252-442 (TPLEEHLKRS…PIIQHADWFF (191 aa)). Residues 459-475 (TPSSNHSFHTGNDSDSG) show a composition bias toward polar residues. Residues 459 to 482 (TPSSNHSFHTGNDSDSGTLERKRP) form a disordered region. 2 positions are modified to phosphoserine: Ser-484 and Ser-575. The interval 511–881 (GGTLNRKHIS…IDNDTESTAL (371 aa)) is disordered. Residues 592 to 617 (RNNSQIASGQNQPQAAAGSHQLSMGQ) are compositionally biased toward polar residues. Pro residues predominate over residues 637–650 (APAPPKPGNPPPGH). The span at 653–664 (GQSSSGTSQHPP) shows a compositional bias: low complexity. Residues 665–678 (SLSPKPPTRSPSPP) show a composition bias toward pro residues. A phosphothreonine mark is found at Thr-679 and Thr-682. Low complexity predominate over residues 679–698 (TQHTGQPPGQPSAPSQLSAP). Phosphoserine occurs at positions 702 and 704. Composition is skewed to pro residues over residues 712-721 (NHPPPQPPTQ), 752-764 (HTPP…PSTP), and 806-816 (RPSVPPPPQPP). Phosphothreonine is present on residues Thr-753, Thr-757, and Thr-759. Residues 753–766 (TPPQTPTPPSTPPL) carry the SH3-binding motif. Ser-762 carries the phosphoserine modification. The residue at position 763 (Thr-763) is a Phosphothreonine. The segment covering 822-844 (GDSSLTNTAPTASKIVTDSNSRV) has biased composition (polar residues). Over residues 845 to 865 (SEPHRSIFPEMHSDSASKDVP) the composition is skewed to basic and acidic residues. Acidic residues predominate over residues 872-881 (IDNDTESTAL).

Component of a complex whose core is composed of ARHGAP17, AMOT, PALS1, PATJ and PARD3/PAR3. Interacts with NHERF1, FNBP1, TRIP10, CAPZA (CAPZA1, CAPZA2 or CAPZA3), CAPZB, CD2AP and SH3KBP1/CIN85. In terms of tissue distribution, ubiquitously expressed. Expressed at higher level in heart and placenta.

The protein resides in the membrane. It localises to the cytoplasm. Its subcellular location is the cell junction. It is found in the tight junction. Functionally, rho GTPase-activating protein involved in the maintenance of tight junction by regulating the activity of CDC42, thereby playing a central role in apical polarity of epithelial cells. Specifically acts as a GTPase activator for the CDC42 GTPase by converting it to an inactive GDP-bound state. The complex formed with AMOT acts by regulating the uptake of polarity proteins at tight junctions, possibly by deciding whether tight junction transmembrane proteins are recycled back to the plasma membrane or sent elsewhere. Participates in the Ca(2+)-dependent regulation of exocytosis, possibly by catalyzing GTPase activity of Rho family proteins and by inducing the reorganization of the cortical actin filaments. Acts as a GTPase activator in vitro for RAC1. This Homo sapiens (Human) protein is Rho GTPase-activating protein 17 (ARHGAP17).